The primary structure comprises 328 residues: MSIIDSTTGANASNLPLSPLLVILGNTGSGKSALAINLAKVIPAGIINADSRQIYSRMDIATAKPTLSEMLEIPHYLYSFIQPDQPFSLAEYQTLAYQAIDSLHTQNRLPVLVGGSGQYLKAVLEGWSIPPVAPDETFRAALFEKAEKEGGDVIFTELEKKDPQAATQIDPRNIRRVVRALEVIHKTGGKFSGLLIKNPPPYRVFKIGIHIPREELYRTVDLRVEKMLEQGLEAEVRSLLEKGYKASLPSMSGIGYRQIAKYIEGGISLTEAVEQMKFETHRLIRQQNTYFRLTDTNIHWITLEESRSNGIIQLVCDFLAAENKNEIH.

ATP is bound at residue Gly-25–Ser-32. Substrate is bound at residue Thr-27–Ser-32. Residues Asp-50–Gln-53 form an interaction with substrate tRNA region.

Belongs to the IPP transferase family. As to quaternary structure, monomer. The cofactor is Mg(2+).

It carries out the reaction adenosine(37) in tRNA + dimethylallyl diphosphate = N(6)-dimethylallyladenosine(37) in tRNA + diphosphate. Functionally, catalyzes the transfer of a dimethylallyl group onto the adenine at position 37 in tRNAs that read codons beginning with uridine, leading to the formation of N6-(dimethylallyl)adenosine (i(6)A). The polypeptide is tRNA dimethylallyltransferase (Dehalococcoides mccartyi (strain ATCC BAA-2100 / JCM 16839 / KCTC 5957 / BAV1)).